We begin with the raw amino-acid sequence, 142 residues long: Large ribosomal subunit protein uL13 (142 aa).

Belongs to the universal ribosomal protein uL13 family. In terms of assembly, part of the 50S ribosomal subunit.

In terms of biological role, this protein is one of the early assembly proteins of the 50S ribosomal subunit, although it is not seen to bind rRNA by itself. It is important during the early stages of 50S assembly. In Ralstonia nicotianae (strain ATCC BAA-1114 / GMI1000) (Ralstonia solanacearum), this protein is Large ribosomal subunit protein uL13.